The chain runs to 439 residues: MPPPSSHSNIFHSTFKHTVKETMANAKKTMIAKILSSRNKWAICDRTLYPIYYLLLILGLNQSIRPNNSLLFRIYSWLVFCLLLFTTLRKFNQVGVRPNGTRENLQEFFANPRSMITLCNALIMLSGLLASLQLYTLGAKRLKPLKILCQFSLNVRTKQAERRQFMINTFLAVFSGLLALTMAATYAMSKWGYILYIVGTPNLDTETIFCVLLDSYALFVSRAAISALAILFYQHCSVIRRSIKHLINEMVPAEQDECPLPESSLQKIHDCQISYQRIFNGKAVIEEYYSFVLFYSYGVCIPIFCFLMFVGMSAQSICWSEVVSIVIWIVNAILVLLLFSLPAFMINEDGDRLVASSFRMYHETFHEERDLTVLSQMTFFTFQIHSTKLTLSACNYFYMDRSILLSLFSAILTYFLILWEFDIKNNQSLQNIANHTIHT.

The Cytoplasmic portion of the chain corresponds to 1–67 (MPPPSSHSNI…LGLNQSIRPN (67 aa)). Residues 68–88 (NSLLFRIYSWLVFCLLLFTTL) form a helical membrane-spanning segment. Residues 89 to 114 (RKFNQVGVRPNGTRENLQEFFANPRS) are Extracellular-facing. A helical membrane pass occupies residues 115 to 135 (MITLCNALIMLSGLLASLQLY). The Cytoplasmic segment spans residues 136–164 (TLGAKRLKPLKILCQFSLNVRTKQAERRQ). Residues 165-185 (FMINTFLAVFSGLLALTMAAT) form a helical membrane-spanning segment. Residues 186–211 (YAMSKWGYILYIVGTPNLDTETIFCV) lie on the Extracellular side of the membrane. A helical transmembrane segment spans residues 212–232 (LLDSYALFVSRAAISALAILF). The Cytoplasmic portion of the chain corresponds to 233–290 (YQHCSVIRRSIKHLINEMVPAEQDECPLPESSLQKIHDCQISYQRIFNGKAVIEEYYS). The helical transmembrane segment at 291-311 (FVLFYSYGVCIPIFCFLMFVG) threads the bilayer. The Extracellular portion of the chain corresponds to 312–324 (MSAQSICWSEVVS). A helical membrane pass occupies residues 325 to 345 (IVIWIVNAILVLLLFSLPAFM). The Cytoplasmic portion of the chain corresponds to 346–402 (INEDGDRLVASSFRMYHETFHEERDLTVLSQMTFFTFQIHSTKLTLSACNYFYMDRS). Residues 403–423 (ILLSLFSAILTYFLILWEFDI) traverse the membrane as a helical segment. Topologically, residues 424–439 (KNNQSLQNIANHTIHT) are extracellular.

This sequence belongs to the insect chemoreceptor superfamily. Gustatory receptor (GR) family. As to expression, expressed in the AVG and PVT neurons of the tail.

Its subcellular location is the cell membrane. In terms of biological role, photoreceptor for short wavelength (UV) light that mediates UV-light-induced avoidance behavior. Directly senses and absorbs both UV-A and UV-B light with very high efficiency. Absorption of UV-B but not UV-A light shows resistance to photobleaching. In contrast to other photoreceptors, does not use a prosthetic chromophore to capture photons and only depends on its protein conformation. Might have a role in response to white light exposure. This chain is High-energy light unresponsive protein 1, found in Caenorhabditis elegans.